The following is a 133-amino-acid chain: Large ribosomal subunit protein uL15 (133 aa).

A disordered region spans residues 1–64 (MGLENLKPAK…QPLQRRLPKI (64 aa)).

Belongs to the universal ribosomal protein uL15 family. As to quaternary structure, part of the 50S ribosomal subunit.

Binds to the 23S rRNA. This chain is Large ribosomal subunit protein uL15, found in Helicobacter pylori (strain Shi470).